The following is a 270-amino-acid chain: 4-hydroxy-tetrahydrodipicolinate reductase (270 aa).

NAD(+) is bound by residues 11–16 and E37; that span reads GASGRM. R38 provides a ligand contact to NADP(+). NAD(+) is bound by residues 101 to 103 and 125 to 128; these read GTT and SPNM. Residue H158 is the Proton donor/acceptor of the active site. H159 is a binding site for (S)-2,3,4,5-tetrahydrodipicolinate. The active-site Proton donor is the K162. 168 to 169 contacts (S)-2,3,4,5-tetrahydrodipicolinate; the sequence is GT.

It belongs to the DapB family.

Its subcellular location is the cytoplasm. It catalyses the reaction (S)-2,3,4,5-tetrahydrodipicolinate + NAD(+) + H2O = (2S,4S)-4-hydroxy-2,3,4,5-tetrahydrodipicolinate + NADH + H(+). The enzyme catalyses (S)-2,3,4,5-tetrahydrodipicolinate + NADP(+) + H2O = (2S,4S)-4-hydroxy-2,3,4,5-tetrahydrodipicolinate + NADPH + H(+). Its pathway is amino-acid biosynthesis; L-lysine biosynthesis via DAP pathway; (S)-tetrahydrodipicolinate from L-aspartate: step 4/4. Functionally, catalyzes the conversion of 4-hydroxy-tetrahydrodipicolinate (HTPA) to tetrahydrodipicolinate. This chain is 4-hydroxy-tetrahydrodipicolinate reductase, found in Shewanella denitrificans (strain OS217 / ATCC BAA-1090 / DSM 15013).